The chain runs to 66 residues: Beta-defensin 134 (66 aa).

Positions 1–19 (MKPLLVVFVFLFLWDPVLA) are cleaved as a signal peptide. 3 cysteine pairs are disulfide-bonded: C32–C58, C38–C52, and C42–C59.

The protein belongs to the beta-defensin family.

The protein resides in the secreted. Functionally, has antibacterial activity. The chain is Beta-defensin 134 (DEFB134) from Homo sapiens (Human).